Consider the following 205-residue polypeptide: Proteasome subunit beta type-3 (205 aa).

This sequence belongs to the peptidase T1B family. As to quaternary structure, the 26S proteasome consists of a 20S proteasome core and two 19S regulatory subunits. The 20S proteasome core is composed of 28 subunits that are arranged in four stacked rings, resulting in a barrel-shaped structure. The two end rings are each formed by seven alpha subunits, and the two central rings are each formed by seven beta subunits. The catalytic chamber with the active sites is on the inside of the barrel.

Its subcellular location is the cytoplasm. The protein resides in the nucleus. Non-catalytic component of the proteasome, a multicatalytic proteinase complex which is characterized by its ability to cleave peptides with Arg, Phe, Tyr, Leu, and Glu adjacent to the leaving group at neutral or slightly basic pH. The proteasome has an ATP-dependent proteolytic activity. This chain is Proteasome subunit beta type-3 (psmB3), found in Dictyostelium discoideum (Social amoeba).